The following is a 254-amino-acid chain: Ribosomal RNA small subunit methyltransferase J (254 aa).

S-adenosyl-L-methionine contacts are provided by residues 107–108 (RD), 123–124 (ER), and Asp-177.

Belongs to the methyltransferase superfamily. RsmJ family.

The protein resides in the cytoplasm. The enzyme catalyses guanosine(1516) in 16S rRNA + S-adenosyl-L-methionine = N(2)-methylguanosine(1516) in 16S rRNA + S-adenosyl-L-homocysteine + H(+). Functionally, specifically methylates the guanosine in position 1516 of 16S rRNA. This is Ribosomal RNA small subunit methyltransferase J from Histophilus somni (strain 129Pt) (Haemophilus somnus).